The chain runs to 732 residues: Ets DNA-binding protein pokkuri (732 aa).

The 85-residue stretch at 33 to 117 (SSQLAELKTQ…NVLQMLIIES (85 aa)) folds into the PNT domain. Positions 133–295 (SRYPLSPHSH…PPGTPILKDI (163 aa)) are disordered. Residues 141 to 157 (SHPPTPTWPPLNAPPEN) show a composition bias toward pro residues. The span at 176–193 (NSVTLSPPPSVDSQASSP) shows a compositional bias: polar residues. Positions 205–240 (GAAPGSAGGSAPAAGGATNTSNPTSSSASSTGSNGS) are enriched in low complexity. The ETS DNA-binding region spans 396 to 479 (RLLWDFLQQL…QGERHCYQFL (84 aa)). Disordered stretches follow at residues 496 to 548 (QSTP…NGPM), 590 to 647 (GPPP…TATS), and 674 to 732 (VAAS…HMQQ). The span at 506-539 (SPSMPQGSSQAPGSPAGQNWNPQQQSQQQQQSPQ) shows a compositional bias: low complexity. Ser543 carries the phosphoserine modification. Polar residues predominate over residues 637-647 (LSVSSKSTATS). 3 positions are modified to phosphoserine: Ser677, Ser682, and Ser696. Polar residues predominate over residues 690-709 (AGASNASSSPRPMDQASEQA).

This sequence belongs to the ETS family. Phosphorylated in response to MAPK signaling. May be phosphorylated by rl. Expressed in R7 and cone cells of the eye.

The protein resides in the nucleus. Its function is as follows. Ets-related protein that functions as a negative regulator of photoreceptor development acting antagonistically to pnt and the proneural signal mediated by RAS. It acts upstream of SINA to inhibit R7 development. The sequence is that of Ets DNA-binding protein pokkuri (aop) from Drosophila melanogaster (Fruit fly).